The following is a 327-amino-acid chain: L-lactate dehydrogenase (327 aa).

NAD(+)-binding positions include valine 18, aspartate 39, lysine 44, tyrosine 69, and 83–84 (GA). Residues glutamine 86, arginine 92, and 124–127 (NPVD) contribute to the substrate site. NAD(+)-binding positions include 122–124 (AAN) and serine 147. 152-155 (DSAR) is a binding site for substrate. Residues arginine 157 and histidine 172 each contribute to the beta-D-fructose 1,6-bisphosphate site. Histidine 179 (proton acceptor) is an active-site residue. Position 224 is a phosphotyrosine (tyrosine 224). Threonine 233 contributes to the substrate binding site.

Belongs to the LDH/MDH superfamily. LDH family. In terms of assembly, homotetramer.

It is found in the cytoplasm. The catalysed reaction is (S)-lactate + NAD(+) = pyruvate + NADH + H(+). Its pathway is fermentation; pyruvate fermentation to lactate; (S)-lactate from pyruvate: step 1/1. With respect to regulation, allosterically activated by fructose 1,6-bisphosphate (FBP). In terms of biological role, catalyzes the conversion of lactate to pyruvate. In Streptococcus uberis (strain ATCC BAA-854 / 0140J), this protein is L-lactate dehydrogenase.